The following is a 261-amino-acid chain: Probable membrane transporter protein PD_1894 (261 aa).

A run of 8 helical transmembrane segments spans residues 6 to 26 (LIVT…LGGG), 45 to 64 (HIAI…ANLI), 78 to 98 (VIFA…GMLI), 99 to 119 (DGQR…LLML), 150 to 170 (AASG…LIFA), 175 to 195 (TINA…ITTL), 205 to 225 (WTIA…GTLL), and 239 to 259 (VFGL…WASL).

It belongs to the 4-toluene sulfonate uptake permease (TSUP) (TC 2.A.102) family.

It is found in the cell membrane. The sequence is that of Probable membrane transporter protein PD_1894 from Xylella fastidiosa (strain Temecula1 / ATCC 700964).